The primary structure comprises 968 residues: RNA polymerase-associated protein RapA (968 aa).

One can recognise a Helicase ATP-binding domain in the interval Asp-164–Asn-334. Position 177–184 (Asp-177–Thr-184) interacts with ATP. Residues Asp-280 to His-283 carry the DEAH box motif. In terms of domain architecture, Helicase C-terminal spans Arg-490–Gly-662.

It belongs to the SNF2/RAD54 helicase family. RapA subfamily. In terms of assembly, interacts with the RNAP. Has a higher affinity for the core RNAP than for the holoenzyme. Its ATPase activity is stimulated by binding to RNAP.

Transcription regulator that activates transcription by stimulating RNA polymerase (RNAP) recycling in case of stress conditions such as supercoiled DNA or high salt concentrations. Probably acts by releasing the RNAP, when it is trapped or immobilized on tightly supercoiled DNA. Does not activate transcription on linear DNA. Probably not involved in DNA repair. The sequence is that of RNA polymerase-associated protein RapA from Escherichia coli O139:H28 (strain E24377A / ETEC).